Consider the following 443-residue polypeptide: Thymidine phosphorylase (443 aa).

Belongs to the thymidine/pyrimidine-nucleoside phosphorylase family. As to quaternary structure, homodimer.

It carries out the reaction thymidine + phosphate = 2-deoxy-alpha-D-ribose 1-phosphate + thymine. Its pathway is pyrimidine metabolism; dTMP biosynthesis via salvage pathway; dTMP from thymine: step 1/2. The enzymes which catalyze the reversible phosphorolysis of pyrimidine nucleosides are involved in the degradation of these compounds and in their utilization as carbon and energy sources, or in the rescue of pyrimidine bases for nucleotide synthesis. This chain is Thymidine phosphorylase, found in Aliivibrio fischeri (strain ATCC 700601 / ES114) (Vibrio fischeri).